We begin with the raw amino-acid sequence, 826 residues long: Ubiquitin carboxyl-terminal hydrolase 16 (826 aa).

The UBP-type zinc finger occupies 22-142 (PMCRHIRKGL…QVVDYVRKQA (121 aa)). Residues Cys-24, His-26, Cys-48, Cys-51, Cys-74, Cys-77, Cys-82, His-90, His-94, His-103, Cys-116, and Cys-119 each coordinate Zn(2+). Lys-140 is covalently cross-linked (Glycyl lysine isopeptide (Lys-Gly) (interchain with G-Cter in SUMO2)). A disordered region spans residues 146–190 (TPKPAEKDNGNIELENKKLEKESKNEQEREKKENMAKENPPMNSP). The span at 149–181 (PAEKDNGNIELENKKLEKESKNEQEREKKENMA) shows a compositional bias: basic and acidic residues. Ser-189 carries the post-translational modification Phosphoserine. In terms of domain architecture, USP spans 196 to 825 (KGLSNLGNTC…QAYLLFYERI (630 aa)). Cys-205 acts as the Nucleophile in catalysis. Residues 394 to 408 (SGKKSVNDKNLKKTM) are compositionally biased toward basic and acidic residues. Positions 394-460 (SGKKSVNDKN…AKNQRRQQKI (67 aa)) are disordered. Residues 409-420 (EDEDQDSEEEKD) are compositionally biased toward acidic residues. A Phosphoserine modification is found at Ser-415. The span at 421-430 (NDSYIKERSD) shows a compositional bias: basic and acidic residues. Basic residues predominate over residues 438–458 (HLQKKAKKQAKKQAKNQRRQQ). Residue Ser-552 is modified to Phosphoserine. Thr-557 bears the Phosphothreonine mark. His-761 (proton acceptor) is an active-site residue.

It belongs to the peptidase C19 family. USP16 subfamily. As to quaternary structure, homotetramer. Associates with late pre-40S ribosomes. Interacts with CEP78; promoting deubiquitination of tektins. In terms of processing, phosphorylated at the onset of mitosis and dephosphorylated during the metaphase/anaphase transition. Phosphorylation by AURKB enhances the deubiquitinase activity.

The protein resides in the nucleus. The catalysed reaction is Thiol-dependent hydrolysis of ester, thioester, amide, peptide and isopeptide bonds formed by the C-terminal Gly of ubiquitin (a 76-residue protein attached to proteins as an intracellular targeting signal).. Its function is as follows. Specifically deubiquitinates 'Lys-120' of histone H2A (H2AK119Ub), a specific tag for epigenetic transcriptional repression, thereby acting as a coactivator. Deubiquitination of histone H2A is a prerequisite for subsequent phosphorylation at 'Ser-11' of histone H3 (H3S10ph), and is required for chromosome segregation when cells enter into mitosis. In resting B- and T-lymphocytes, phosphorylation by AURKB leads to enhance its activity, thereby maintaining transcription in resting lymphocytes. Regulates Hox gene expression via histone H2A deubiquitination. Prefers nucleosomal substrates. Does not deubiquitinate histone H2B. Also deubiquitinates non-histone proteins, such as ribosomal protein RPS27A: deubiquitination of monoubiquitinated RPS27A promotes maturation of the 40S ribosomal subunit. Also mediates deubiquitination of tektin proteins (TEKT1, TEKT2, TEK3, TEKT4 and TEKT5), promoting their stability. This Macaca fascicularis (Crab-eating macaque) protein is Ubiquitin carboxyl-terminal hydrolase 16.